Here is a 432-residue protein sequence, read N- to C-terminus: Neuronal pentraxin-1 (432 aa).

Positions 1-22 (MLAGRAARTCALLALCLLGSGA) are cleaved as a signal peptide. Positions 88–122 (RCESQSTLDSGPGEARSGGGRKQPGSGKNTMGDLS) are disordered. Asn-154 and Asn-193 each carry an N-linked (GlcNAc...) asparagine glycan. The Pentraxin (PTX) domain maps to 226–428 (DKFQLTFPLR…GATKWTFEAC (203 aa)). A disulfide bond links Cys-256 and Cys-316. Residues Asn-280, Glu-358, Gln-359, Asp-360, and Gln-370 each contribute to the Ca(2+) site.

Homooligomer or heterooligomer (probably pentamer) with neuronal pentraxin receptor (NPTXR). Ca(2+) is required as a cofactor. As to expression, expressed in brain and kidney.

It is found in the secreted. The protein localises to the cytoplasmic vesicle. The protein resides in the secretory vesicle. It localises to the endoplasmic reticulum. In terms of biological role, may be involved in mediating uptake of synaptic material during synapse remodeling or in mediating the synaptic clustering of AMPA glutamate receptors at a subset of excitatory synapses. In Mus musculus (Mouse), this protein is Neuronal pentraxin-1 (Nptx1).